The sequence spans 99 residues: MSIYVGNLSYSVTQDDLTKVFSEYGSVTRVQLPTDRETGRVRGFGFVEMESSAAEDAAIQALDGAEWMGRVLKVNKARPREEKGARSGGGSWSRNNGGY.

Residues 2-79 (SIYVGNLSYS…RVLKVNKARP (78 aa)) enclose the RRM domain. The disordered stretch occupies residues 78-99 (RPREEKGARSGGGSWSRNNGGY). Over residues 86 to 99 (RSGGGSWSRNNGGY) the composition is skewed to gly residues.

The polypeptide is Putative RNA-binding protein RbpE (rbpE) (Nostoc sp. (strain PCC 7120 / SAG 25.82 / UTEX 2576)).